The chain runs to 284 residues: MLIIETLPLLRQQIRRWRQEGKRIALVPTMGNLHEGHMTLVDEAKTRADVVVVTIFVNPLQFERPDDLAHYPRTLQEDCEKLTRHGADLVFAPAAADIYPAGLEKQTYVDVPALSTILEGASRPGHFRGVSTIVSKLFNLIQPDVACFGEKDYQQLALIRKMVADMGYDINIVGVPTVRAKDGLALSSRNGYLTEEERQIAPQLSKIMWALAEKMALGERQIDALLEDAAAQLLRAGFTPDELFIRDAETLQPLTVDSQQAVILMAAWLGKARLIDNQLVDLRH.

An ATP-binding site is contributed by 30–37 (MGNLHEGH). The active-site Proton donor is His-37. Residue Gln-61 participates in (R)-pantoate binding. Residue Gln-61 coordinates beta-alanine. 149 to 152 (GEKD) is a binding site for ATP. Gln-155 provides a ligand contact to (R)-pantoate. ATP-binding positions include Val-178 and 186–189 (LSSR).

It belongs to the pantothenate synthetase family. As to quaternary structure, homodimer.

The protein resides in the cytoplasm. It catalyses the reaction (R)-pantoate + beta-alanine + ATP = (R)-pantothenate + AMP + diphosphate + H(+). Its pathway is cofactor biosynthesis; (R)-pantothenate biosynthesis; (R)-pantothenate from (R)-pantoate and beta-alanine: step 1/1. Functionally, catalyzes the condensation of pantoate with beta-alanine in an ATP-dependent reaction via a pantoyl-adenylate intermediate. This chain is Pantothenate synthetase, found in Yersinia pseudotuberculosis serotype O:1b (strain IP 31758).